Here is a 320-residue protein sequence, read N- to C-terminus: Short-chain dehydrogenase TIC 32 B, chloroplastic (320 aa).

NADP(+)-binding positions include 40–46, 92–93, Asn119, and Thr140; these read GGTSGIG and DL. Ser174 lines the substrate pocket. The active-site Proton acceptor is the Tyr196. Positions 301–317 are interaction with calmodulin; sequence DTTLADKLWDFSIKLVD.

The protein belongs to the short-chain dehydrogenases/reductases (SDR) family. As to quaternary structure, part of the Tic complex.

The protein localises to the plastid. It is found in the chloroplast inner membrane. Functionally, involved in protein precursor import into chloroplasts. This Brassica napus (Rape) protein is Short-chain dehydrogenase TIC 32 B, chloroplastic.